The sequence spans 123 residues: Protein LLP homolog (123 aa).

The segment covering 1 to 21 (MAKSLRSKWKRKMRAEKRKKN) has biased composition (basic residues). 2 disordered regions span residues 1-22 (MAKS…KKNA) and 61-123 (DLDV…KLAW). Residues 70-89 (ESSKMDTELKRNKKNLRDQH) show a composition bias toward basic and acidic residues. The span at 100–123 (QQKKLKSQCGKKKGKSKQAKKLAW) shows a compositional bias: basic residues.

Belongs to the learning-associated protein family.

It localises to the nucleus. The protein resides in the nucleolus. It is found in the chromosome. In terms of biological role, regulates dendritic and spine growth and synaptic transmission. This is Protein LLP homolog (llph) from Xenopus laevis (African clawed frog).